We begin with the raw amino-acid sequence, 177 residues long: ATP synthase subunit delta (177 aa).

The protein belongs to the ATPase delta chain family. F-type ATPases have 2 components, F(1) - the catalytic core - and F(0) - the membrane proton channel. F(1) has five subunits: alpha(3), beta(3), gamma(1), delta(1), epsilon(1). F(0) has three main subunits: a(1), b(2) and c(10-14). The alpha and beta chains form an alternating ring which encloses part of the gamma chain. F(1) is attached to F(0) by a central stalk formed by the gamma and epsilon chains, while a peripheral stalk is formed by the delta and b chains.

The protein resides in the cell inner membrane. Its function is as follows. F(1)F(0) ATP synthase produces ATP from ADP in the presence of a proton or sodium gradient. F-type ATPases consist of two structural domains, F(1) containing the extramembraneous catalytic core and F(0) containing the membrane proton channel, linked together by a central stalk and a peripheral stalk. During catalysis, ATP synthesis in the catalytic domain of F(1) is coupled via a rotary mechanism of the central stalk subunits to proton translocation. Functionally, this protein is part of the stalk that links CF(0) to CF(1). It either transmits conformational changes from CF(0) to CF(1) or is implicated in proton conduction. The protein is ATP synthase subunit delta of Shewanella sediminis (strain HAW-EB3).